We begin with the raw amino-acid sequence, 292 residues long: Elongation factor Ts (292 aa).

Positions 79 to 82 (TDFV) are involved in Mg(2+) ion dislocation from EF-Tu.

It belongs to the EF-Ts family.

Its subcellular location is the cytoplasm. In terms of biological role, associates with the EF-Tu.GDP complex and induces the exchange of GDP to GTP. It remains bound to the aminoacyl-tRNA.EF-Tu.GTP complex up to the GTP hydrolysis stage on the ribosome. In Xanthomonas campestris pv. campestris (strain ATCC 33913 / DSM 3586 / NCPPB 528 / LMG 568 / P 25), this protein is Elongation factor Ts.